The sequence spans 328 residues: tRNA U34 carboxymethyltransferase (328 aa).

Residues K91, W105, K110, G130, 152–154 (DPS), M196, Y200, and R315 each bind carboxy-S-adenosyl-L-methionine.

Belongs to the class I-like SAM-binding methyltransferase superfamily. CmoB family. As to quaternary structure, homotetramer.

The enzyme catalyses carboxy-S-adenosyl-L-methionine + 5-hydroxyuridine(34) in tRNA = 5-carboxymethoxyuridine(34) in tRNA + S-adenosyl-L-homocysteine + H(+). Its function is as follows. Catalyzes carboxymethyl transfer from carboxy-S-adenosyl-L-methionine (Cx-SAM) to 5-hydroxyuridine (ho5U) to form 5-carboxymethoxyuridine (cmo5U) at position 34 in tRNAs. The chain is tRNA U34 carboxymethyltransferase from Psychromonas ingrahamii (strain DSM 17664 / CCUG 51855 / 37).